Here is a 347-residue protein sequence, read N- to C-terminus: Phenylalanine--tRNA ligase alpha subunit (347 aa).

Mg(2+) is bound at residue E265.

Belongs to the class-II aminoacyl-tRNA synthetase family. Phe-tRNA synthetase alpha subunit type 1 subfamily. Tetramer of two alpha and two beta subunits. It depends on Mg(2+) as a cofactor.

Its subcellular location is the cytoplasm. It carries out the reaction tRNA(Phe) + L-phenylalanine + ATP = L-phenylalanyl-tRNA(Phe) + AMP + diphosphate + H(+). The protein is Phenylalanine--tRNA ligase alpha subunit of Wolbachia pipientis wMel.